The primary structure comprises 490 residues: Bifunctional protein HldE (490 aa).

The ribokinase stretch occupies residues Met-1–Ala-330. Asn-205 to Glu-208 is an ATP binding site. Asp-275 is a catalytic residue. The segment at Phe-358 to Ser-490 is cytidylyltransferase.

It in the N-terminal section; belongs to the carbohydrate kinase PfkB family. This sequence in the C-terminal section; belongs to the cytidylyltransferase family. Homodimer.

It carries out the reaction D-glycero-beta-D-manno-heptose 7-phosphate + ATP = D-glycero-beta-D-manno-heptose 1,7-bisphosphate + ADP + H(+). The catalysed reaction is D-glycero-beta-D-manno-heptose 1-phosphate + ATP + H(+) = ADP-D-glycero-beta-D-manno-heptose + diphosphate. The protein operates within nucleotide-sugar biosynthesis; ADP-L-glycero-beta-D-manno-heptose biosynthesis; ADP-L-glycero-beta-D-manno-heptose from D-glycero-beta-D-manno-heptose 7-phosphate: step 1/4. It functions in the pathway nucleotide-sugar biosynthesis; ADP-L-glycero-beta-D-manno-heptose biosynthesis; ADP-L-glycero-beta-D-manno-heptose from D-glycero-beta-D-manno-heptose 7-phosphate: step 3/4. Catalyzes the phosphorylation of D-glycero-D-manno-heptose 7-phosphate at the C-1 position to selectively form D-glycero-beta-D-manno-heptose-1,7-bisphosphate. Its function is as follows. Catalyzes the ADP transfer from ATP to D-glycero-beta-D-manno-heptose 1-phosphate, yielding ADP-D-glycero-beta-D-manno-heptose. The sequence is that of Bifunctional protein HldE from Rhodopseudomonas palustris (strain ATCC BAA-98 / CGA009).